A 1011-amino-acid chain; its full sequence is Vacuolar membrane protease (1011 aa).

Residues 1 to 9 lie on the Cytoplasmic side of the membrane; that stretch reads MSNPFAFRS. The helical transmembrane segment at 10–30 threads the bilayer; sequence AQVTFWTTVVYLALLVPLVVI. The Vacuolar portion of the chain corresponds to 31–378; that stretch reads NEGVPPVQPD…TFVLFGLRGM (348 aa). Asn50 and Asn106 each carry an N-linked (GlcNAc...) asparagine glycan. Zn(2+)-binding residues include His159 and Asp171. Glu205 serves as the catalytic Proton acceptor. Zn(2+)-binding residues include Glu206, Glu231, and His304. Residue Asn331 is glycosylated (N-linked (GlcNAc...) asparagine). Residues 379-399 form a helical membrane-spanning segment; sequence FAWSLTVLIVGPLTLFGMMYL. Topologically, residues 400 to 439 are cytoplasmic; that stretch reads VHKQGKGYAFHTKLRATSDSSSEDGDDEDGEVIRLGGWKG. The helical transmembrane segment at 440–460 threads the bilayer; that stretch reads FFRFPFALIVAGALVTGAALL. Residues 461 to 471 are Vacuolar-facing; sequence LRKMNPFIIYS. The chain crosses the membrane as a helical span at residues 472–492; sequence SEYAVWAMMISLFYFGFWLIM. At 493–505 the chain is on the cytoplasmic side; that stretch reads RGSSYTRPSALHR. The chain crosses the membrane as a helical span at residues 506–526; that stretch reads LYVHIWLFILGWVALVFATVL. Residues 527–536 lie on the Vacuolar side of the membrane; it reads EDRMRIASGY. Residues 537–557 form a helical membrane-spanning segment; sequence IFVFWESQVFLATLVAVCELF. Over 558–682 the chain is Cytoplasmic; that stretch reads SLPRKIDFAR…WSGPMVTSTW (125 aa). Residues 595–609 show a composition bias toward polar residues; that stretch reads EATSPQRAGQSSNSP. Disordered regions lie at residues 595-627 and 650-671; these read EATS…LFRK and IMDS…EGEQ. Acidic residues predominate over residues 610–622; it reads QEDDEDDVPDEET. The helical transmembrane segment at 683 to 703 threads the bilayer; that stretch reads ILQFLLLGPFMVILGGQVGLL. The Vacuolar segment spans residues 704–719; that stretch reads LTSAVNQTGVDGSSLL. An N-linked (GlcNAc...) asparagine glycan is attached at Asn709. A helical transmembrane segment spans residues 720 to 740; that stretch reads APYLMIAALSAILLMPLSPFI. The Cytoplasmic portion of the chain corresponds to 741-747; that stretch reads HRVTKHV. The helical transmembrane segment at 748–768 threads the bilayer; sequence PLFLLAVAFATLIYSLVAFPF. Over 769–1011 the chain is Vacuolar; sequence SPRAPYKTFF…LVEGSKAFKV (243 aa). The N-linked (GlcNAc...) asparagine glycan is linked to Asn872.

Belongs to the peptidase M28 family. It depends on Zn(2+) as a cofactor.

The protein localises to the vacuole membrane. May be involved in vacuolar sorting and osmoregulation. This chain is Vacuolar membrane protease, found in Pyricularia oryzae (strain 70-15 / ATCC MYA-4617 / FGSC 8958) (Rice blast fungus).